Consider the following 1442-residue polypeptide: ABC transporter G family member 11 (1442 aa).

The ABC transporter 1 domain occupies 125–373 (LFTPSFWTKK…FMSLGFDCEP (249 aa)). The 241-residue stretch at 478-718 (LNDKFGMYSK…EQGSLYFKGD (241 aa)) folds into the ABC transmembrane type-2 1 domain. The next 6 helical transmembrane spans lie at 482 to 502 (FGMYSKYLSVLIQGFVYASLF), 518 to 538 (AILSAVIFNAFLSIGEMAMTF), 567 to 587 (IPFTAIQVFLFSIIAYFMFGL), 592 to 612 (GKFFIFCFTLLGASLACTALF), 627 to 647 (NISNVFIIFMLTYSGYTIPIP), and 737 to 757 (IIVYCWWVFFVVCNMFAMEYI). The ABC transporter 2 domain maps to 808-1052 (FTWQNIRYTV…LTSYFERHGV (245 aa)). ATP is bound at residue 844–851 (GSSGAGKT). Positions 1144–1369 (YYTYGSFVQA…YNTCQNYTSA (226 aa)) constitute an ABC transmembrane type-2 2 domain. 6 consecutive transmembrane segments (helical) span residues 1147 to 1167 (YGSFVQAALCGLIIGFTFWNL), 1181 to 1201 (IFEALMLGILLIFVVMPQLII), 1220 to 1240 (FAISIVVVELPFIVISGTIFF), 1259 to 1279 (FYFWFIFIIFMFFCVSFGQAV), 1286 to 1306 (MFFAMTLIPLLIVFLFLFCGV), and 1416 to 1436 (VGIIIGFFVFNILMVILFVYL).

The protein belongs to the ABC transporter superfamily. ABCG family. PDR (TC 3.A.1.205) subfamily.

Its subcellular location is the membrane. The chain is ABC transporter G family member 11 (abcG11) from Dictyostelium discoideum (Social amoeba).